Consider the following 156-residue polypeptide: Transcription antitermination protein NusB (156 aa).

The protein belongs to the NusB family.

Its function is as follows. Involved in transcription antitermination. Required for transcription of ribosomal RNA (rRNA) genes. Binds specifically to the boxA antiterminator sequence of the ribosomal RNA (rrn) operons. In Mycobacterium bovis (strain ATCC BAA-935 / AF2122/97), this protein is Transcription antitermination protein NusB.